The chain runs to 452 residues: GTPase Der (452 aa).

2 EngA-type G domains span residues 4 to 169 (PIVA…PSPD) and 177 to 352 (INVS…EEHR). GTP-binding positions include 10 to 17 (GRPNVGKS), 57 to 61 (DTGGL), 120 to 123 (NKCE), 183 to 190 (GRPNVGKS), 230 to 234 (DTAGI), and 295 to 298 (NKWD). The KH-like domain occupies 353–438 (RRVNTSVVNE…PIRLLWRGKK (86 aa)).

It belongs to the TRAFAC class TrmE-Era-EngA-EngB-Septin-like GTPase superfamily. EngA (Der) GTPase family. Associates with the 50S ribosomal subunit.

Functionally, GTPase that plays an essential role in the late steps of ribosome biogenesis. The sequence is that of GTPase Der from Crocosphaera subtropica (strain ATCC 51142 / BH68) (Cyanothece sp. (strain ATCC 51142)).